A 162-amino-acid chain; its full sequence is Epoxidase pydX (162 aa).

Residues 1-26 (MSLIALPLRLLRLLPAITSTWVLAFA) form the signal peptide. A run of 2 helical transmembrane segments spans residues 62-82 (WILIVVYPINYALGVVNLFVG) and 89-109 (TGAMSWYTIGLLFSLAHMGYM). N-linked (GlcNAc...) asparagine glycosylation is found at asparagine 127 and asparagine 139.

This sequence belongs to the epoxidase xenD family.

It localises to the membrane. The protein operates within mycotoxin biosynthesis. Epoxidase; part of the gene cluster that mediates the biosynthesis of pyrrocidines, fungal natural products containing a macrocyclic para-cyclophane connected to a decahydrofluorene ring system that show potent antibiotic activities toward Gram-negative bacteria. Within the pathway, pydX functions synergistically with pydB, pydE and pydZ to form the cyclophane. The pathway begins with the PKS-NRPS pydA which, with the help of the trans-enoyl reductase pydC, synthesizes the polyketide-tyrosyl acyl thioester product which can be reductively off-loaded by the terminal reductase (R) domain in pydA. The alpha/beta hydrolase pydG is then required to catalyze the subsequent Knoevenagel condensation that affords the 3-pyrrolin-2-one ring, whereas the four proteins pydB, pydE, pydX and pydZ then function synergistically to form the cyclophane. PydB and the membrane-bound pydX and pydZ are lipid-binding proteins that can sequester and mold the pdyG product into the inverse S-shape. Binding of the medium chain reductase pydE to the complex would trigger the cascade oxidative cyclization. PydY is involved in the Diels-Alder cycloaddition that forms the decahydrofluorene core. Additional non-enzymatic hydroxylation yields pyrrocidine A2 which can be further reduced into pyrrocidine B by an endogenous reductase. The chain is Epoxidase pydX from Acremonium sp.